The primary structure comprises 207 residues: Thymidylate kinase (207 aa).

ATP is bound at residue 7-14 (GCEGSGKS).

It belongs to the thymidylate kinase family.

It carries out the reaction dTMP + ATP = dTDP + ADP. Functionally, phosphorylation of dTMP to form dTDP in both de novo and salvage pathways of dTTP synthesis. The protein is Thymidylate kinase of Chlamydia felis (strain Fe/C-56) (Chlamydophila felis).